The following is a 73-amino-acid chain: UPF0235 protein PERMA_1406 (73 aa).

The protein belongs to the UPF0235 family.

This chain is UPF0235 protein PERMA_1406, found in Persephonella marina (strain DSM 14350 / EX-H1).